The primary structure comprises 147 residues: MKTPAQRLHLLPLLLLLCGECAQVCGCNETGMLERLPRCGKAFADMMQKVAVWKWCNLSEFIVYYESFTNCTEMETNIMGCYWPNPLAQSFITGIHRQFFSNCTVDRTHWEDPPDEVLIPLIAVPVVLTVAMAGLVVWRSKHTDRLL.

A signal peptide spans 1–22 (MKTPAQRLHLLPLLLLLCGECA). Over 23–112 (QVCGCNETGM…CTVDRTHWED (90 aa)) the chain is Extracellular. Asn28, Asn57, Asn70, and Asn102 each carry an N-linked (GlcNAc...) asparagine glycan. Intrachain disulfides connect Cys39/Cys71 and Cys56/Cys103. A helical membrane pass occupies residues 113 to 137 (PPDEVLIPLIAVPVVLTVAMAGLVV). At 138 to 147 (WRSKHTDRLL) the chain is on the cytoplasmic side.

This sequence belongs to the RAMP family. Heterodimer of CALCRL and RAMP3; interaction induces allosteric modulation of CALCRL function and ligand specificity for adrenomedullin/ADM and intermedin/ADM2. Heterodimer of CALCR and RAMP3; interaction form the receptor complex AMYR3 for amylin/IAPP. Interacts with GPER1. As to expression, expressed predominantly in the testis, embryonic and adult brain and in kidney.

The protein resides in the cell membrane. The protein localises to the membrane. Functionally, accessory protein that interacts with and modulates the function of G-protein coupled receptors including calcitonin gene-related peptide type 1 receptor (CALCRL), calcitonin receptor (CALCR) and G-protein coupled estrogen receptor 1 (GPER1). Required for the transport of CALCRL and GPER1 receptors to the plasma membrane. Plays a role in cardioprotection by reducing cardiac hypertrophy and perivascular fibrosis in a GPER1-dependent manner. Together with CALCRL, form a receptor complex for adrenomedullin/ADM and intermedin/ADM2. Together with CALCR, act as a receptor complex for amylin/IAPP. This is Receptor activity-modifying protein 3 from Mus musculus (Mouse).